The chain runs to 496 residues: Probable cytosol aminopeptidase (496 aa).

Positions 258 and 263 each coordinate Mn(2+). Residue K270 is part of the active site. 3 residues coordinate Mn(2+): D281, D340, and E342. R344 is an active-site residue.

Belongs to the peptidase M17 family. Mn(2+) serves as cofactor.

It localises to the cytoplasm. The catalysed reaction is Release of an N-terminal amino acid, Xaa-|-Yaa-, in which Xaa is preferably Leu, but may be other amino acids including Pro although not Arg or Lys, and Yaa may be Pro. Amino acid amides and methyl esters are also readily hydrolyzed, but rates on arylamides are exceedingly low.. It catalyses the reaction Release of an N-terminal amino acid, preferentially leucine, but not glutamic or aspartic acids.. Functionally, presumably involved in the processing and regular turnover of intracellular proteins. Catalyzes the removal of unsubstituted N-terminal amino acids from various peptides. This chain is Probable cytosol aminopeptidase, found in Helicobacter pylori (strain P12).